Here is a 317-residue protein sequence, read N- to C-terminus: Ferrochelatase (317 aa).

Positions 184 and 259 each coordinate Fe cation.

The protein belongs to the ferrochelatase family.

It is found in the cytoplasm. It carries out the reaction heme b + 2 H(+) = protoporphyrin IX + Fe(2+). It participates in porphyrin-containing compound metabolism; protoheme biosynthesis; protoheme from protoporphyrin-IX: step 1/1. In terms of biological role, catalyzes the ferrous insertion into protoporphyrin IX. In Chlamydia muridarum (strain MoPn / Nigg), this protein is Ferrochelatase.